The chain runs to 729 residues: Monosaccharide-sensing protein 3 (729 aa).

6 consecutive transmembrane segments (helical) span residues 5-25, 46-66, 81-101, 104-124, 135-155, and 165-185; these read VLVALAAAIGNMLQGWDNATI, GLIVAMSLIGATLITTFSGPV, VLYFLSSIVMFWSPNVYVLLF, LLDGFGIGLAVTLVPIYISET, TFPQFCGSGGMFLSYCLVFGM, and LMLGVLSIPSIAYFVLAAFFL. The segment at 337 to 372 is disordered; sequence QESQWDPERNNEDSSDQDENLNSPLLSPQTTEPDDY. Residues 356–367 are compositionally biased toward polar residues; sequence NLNSPLLSPQTT. The residue at position 446 (Ser-446) is a Phosphoserine. The next 6 helical transmembrane spans lie at 511-531, 557-577, 581-601, 610-630, 650-670, and 673-693; these read ALMVGVGLQILQQFAGINGVM, ASLLISALTTLLMLPCILVSM, MLSTIPILILSLVTLVIGSLV, LISTASVTVYLSCFVMGFGAI, ICALTFWICDIIVTYTLPVML, and IGIAGVFGIYAIVCAVAWVFV.

It belongs to the major facilitator superfamily. Sugar transporter (TC 2.A.1.1) family. Weakly expressed.

It localises to the vacuole membrane. The catalysed reaction is D-glucose(out) + H(+)(in) = D-glucose(in) + H(+)(out). It catalyses the reaction sucrose(out) + H(+)(in) = sucrose(in) + H(+)(out). Functionally, sugar proton-coupled antiporter which contributes to vacuolar sugar import (e.g. monosaccharides including glucose,sucrose and fructose), particularly during stress responses (e.g. in response to cold). The polypeptide is Monosaccharide-sensing protein 3 (Arabidopsis thaliana (Mouse-ear cress)).